Consider the following 334-residue polypeptide: DNA-directed RNA polymerase subunit alpha (334 aa).

The segment at 1-231 is alpha N-terminal domain (alpha-NTD); it reads MQSNTFLTPR…EQLSVFADLK (231 aa). The segment at 245-334 is alpha C-terminal domain (alpha-CTD); it reads IDPVLLRPVD…GKKDTSHAAP (90 aa).

This sequence belongs to the RNA polymerase alpha chain family. In terms of assembly, homodimer. The RNAP catalytic core consists of 2 alpha, 1 beta, 1 beta' and 1 omega subunit. When a sigma factor is associated with the core the holoenzyme is formed, which can initiate transcription.

The enzyme catalyses RNA(n) + a ribonucleoside 5'-triphosphate = RNA(n+1) + diphosphate. In terms of biological role, DNA-dependent RNA polymerase catalyzes the transcription of DNA into RNA using the four ribonucleoside triphosphates as substrates. In Nitrosospira multiformis (strain ATCC 25196 / NCIMB 11849 / C 71), this protein is DNA-directed RNA polymerase subunit alpha.